The following is a 498-amino-acid chain: Pyridine nucleotide-disulfide oxidoreductase domain-containing protein 1 (498 aa).

Met-1 is subject to N-acetylmethionine.

It belongs to the class-I pyridine nucleotide-disulfide oxidoreductase family. PYROXD1 subfamily. Requires FAD as cofactor.

It localises to the nucleus. The protein resides in the cytoplasm. It is found in the myofibril. Its subcellular location is the sarcomere. In terms of biological role, probable FAD-dependent oxidoreductase; involved in the cellular oxidative stress response. Required for normal sarcomere structure and muscle fiber integrity. This Mus musculus (Mouse) protein is Pyridine nucleotide-disulfide oxidoreductase domain-containing protein 1 (Pyroxd1).